Reading from the N-terminus, the 392-residue chain is Probable protein phosphatase 2C 78 (392 aa).

The region spanning 39–342 (ASGEYSIAVA…DDITVVVVYL (304 aa)) is the PPM-type phosphatase domain. Positions 73, 74, 274, and 333 each coordinate Mn(2+).

Belongs to the PP2C family. The cofactor is Mg(2+). Mn(2+) serves as cofactor.

The enzyme catalyses O-phospho-L-seryl-[protein] + H2O = L-seryl-[protein] + phosphate. It carries out the reaction O-phospho-L-threonyl-[protein] + H2O = L-threonyl-[protein] + phosphate. This chain is Probable protein phosphatase 2C 78, found in Oryza sativa subsp. japonica (Rice).